A 1015-amino-acid polypeptide reads, in one-letter code: SKI family transcriptional corepressor 2 (1015 aa).

Disordered stretches follow at residues 280–316 (HLLGAPPPPPPPPPPLAELAGAPHAHHKRPRFDDDDD) and 518–934 (GAAG…KKDV). Pro residues predominate over residues 284-295 (APPPPPPPPPPL). A compositionally biased stretch (low complexity) spans 575–600 (PPADSVAAAGAGAAAAGSGPAGSRVP). The segment covering 628–637 (GGKDDAESLA) has biased composition (basic and acidic residues). Positions 653–669 (HPHHHHHPHHHHHHHHP) are enriched in basic residues. Pro residues-rich tracts occupy residues 670-684 (PQPPSPLLLLPPQPD) and 694-708 (APPPPPPPPPPPPLA). Composition is skewed to acidic residues over residues 730–745 (DSSEDEDDEEEEQEVD) and 754–774 (GEEEEEGRDPDDDEEEDEETE). Basic and acidic residues predominate over residues 793–803 (PSEKGSSRDRA). Residues 832-842 (DLPPPPPPPLA) show a composition bias toward pro residues. Composition is skewed to basic and acidic residues over residues 861-877 (PSLEEQPSYKDSQKTKE), 885-899 (TKDDNSFSDKNKEHS), and 912-922 (FWRERSGEHTQ).

Belongs to the SKI family. As to quaternary structure, interacts with SMAD2 and SMAD3. In terms of tissue distribution, expressed in cerebellum, spinal cord and testis. Isoform 2 is present in cerebellum (at protein level).

Its subcellular location is the nucleus. It localises to the cytoplasm. Exhibits transcriptional repressor activity. Acts as a TGF-beta antagonist in the nervous system. The sequence is that of SKI family transcriptional corepressor 2 from Homo sapiens (Human).